A 584-amino-acid polypeptide reads, in one-letter code: DNA mismatch repair protein MutL (584 aa).

Belongs to the DNA mismatch repair MutL/HexB family.

This protein is involved in the repair of mismatches in DNA. It is required for dam-dependent methyl-directed DNA mismatch repair. May act as a 'molecular matchmaker', a protein that promotes the formation of a stable complex between two or more DNA-binding proteins in an ATP-dependent manner without itself being part of a final effector complex. This Syntrophomonas wolfei subsp. wolfei (strain DSM 2245B / Goettingen) protein is DNA mismatch repair protein MutL.